The following is a 112-amino-acid chain: Nucleoid-associated protein lpg2755 (112 aa).

Belongs to the YbaB/EbfC family. In terms of assembly, homodimer.

It localises to the cytoplasm. Its subcellular location is the nucleoid. Functionally, binds to DNA and alters its conformation. May be involved in regulation of gene expression, nucleoid organization and DNA protection. The sequence is that of Nucleoid-associated protein lpg2755 from Legionella pneumophila subsp. pneumophila (strain Philadelphia 1 / ATCC 33152 / DSM 7513).